A 593-amino-acid polypeptide reads, in one-letter code: Translation initiation factor IF-2 (593 aa).

Residues L101–R270 form the tr-type G domain. The tract at residues G110–T117 is G1. G110–T117 is a GTP binding site. The interval G135–H139 is G2. The interval D156–G159 is G3. GTP contacts are provided by residues D156 to H160 and N210 to D213. The interval N210–D213 is G4. The G5 stretch occupies residues S246–R248.

The protein belongs to the TRAFAC class translation factor GTPase superfamily. Classic translation factor GTPase family. IF-2 subfamily.

The protein localises to the cytoplasm. Its function is as follows. One of the essential components for the initiation of protein synthesis. Protects formylmethionyl-tRNA from spontaneous hydrolysis and promotes its binding to the 30S ribosomal subunits. Also involved in the hydrolysis of GTP during the formation of the 70S ribosomal complex. The polypeptide is Translation initiation factor IF-2 (Dehalococcoides mccartyi (strain CBDB1)).